We begin with the raw amino-acid sequence, 1079 residues long: Integrator complex subunit 3 homolog (1079 aa).

3 disordered regions span residues 544 to 574 (ETEA…DDLP), 925 to 949 (YPSS…TPSA), and 1010 to 1079 (AVGR…NDSD). Residues 938–949 (KGSSAASSTPSA) show a composition bias toward low complexity. S1049, S1050, S1054, and S1055 each carry phosphoserine. Positions 1062–1073 (HKITQAAKKRKK) are enriched in basic residues.

This sequence belongs to the Integrator subunit 3 family. In terms of assembly, belongs to the multiprotein complex Integrator, at least composed of IntS1, IntS2, IntS3, IntS4, omd/IntS5, IntS6, defl/IntS7, IntS8, IntS9, IntS10, IntS11, IntS12, asun/IntS13, IntS14 and IntS15. The core complex associates with protein phosphatase 2A subunits mts/PP2A and Pp2A-29B, to form the Integrator-PP2A (INTAC) complex.

It is found in the nucleus. Its subcellular location is the cytoplasm. In terms of biological role, component of the integrator complex, a multiprotein complex that terminates RNA polymerase II (Pol II) transcription in the promoter-proximal region of genes. The integrator complex provides a quality checkpoint during transcription elongation by driving premature transcription termination of transcripts that are unfavorably configured for transcriptional elongation: the complex terminates transcription by (1) catalyzing dephosphorylation of the C-terminal domain (CTD) of Pol II subunit Polr2A/Rbp1 and Spt5, and (2) degrading the exiting nascent RNA transcript via endonuclease activity. The integrator complex is also involved in the 3'-end processing of the U7 snRNA, and also the spliceosomal snRNAs U1, U2, U4 and U5. The polypeptide is Integrator complex subunit 3 homolog (IntS3) (Drosophila mojavensis (Fruit fly)).